The chain runs to 681 residues: Epithelial splicing regulatory protein 1 (681 aa).

3 consecutive RRM domains span residues 225-302 (TVVR…KATG), 326-406 (VIVR…RSTA), and 445-525 (DCIR…QCSA). Ser-543 is modified (phosphoserine). Arg-582 is modified (omega-N-methylarginine).

The protein belongs to the ESRP family. In terms of tissue distribution, epithelial cell-specific.

The protein resides in the nucleus. In terms of biological role, mRNA splicing factor that regulates the formation of epithelial cell-specific isoforms. Specifically regulates the expression of FGFR2-IIIb, an epithelial cell-specific isoform of FGFR2. Also regulates the splicing of CD44, CTNND1, ENAH, 3 transcripts that undergo changes in splicing during the epithelial-to-mesenchymal transition (EMT). Acts by directly binding specific sequences in mRNAs. Binds the GU-rich sequence motifs in the ISE/ISS-3, a cis-element regulatory region present in the mRNA of FGFR2. Regulates splicing and expression of genes involved in inner ear development, auditory hair cell differentiation, and cell fate specification in the cochlear epithelium. This is Epithelial splicing regulatory protein 1 (ESRP1) from Homo sapiens (Human).